A 300-amino-acid polypeptide reads, in one-letter code: Cation-efflux pump FieF (300 aa).

A helical transmembrane segment spans residues 24-44; that stretch reads LLIKILAWWYTGSVSILAALV. Zn(2+) contacts are provided by Asp-45 and Asp-49. Helical transmembrane passes span 82 to 102 and 114 to 134; these read AALAQSMFISGSALFLFLTSI and PGVGIGVTVIALICTIILVTF. Residues His-153 and Asp-157 each contribute to the Zn(2+) site. 2 consecutive transmembrane segments (helical) span residues 156–176 and 178–198; these read SDVMMNGAILIALGLSWYGWH and ADALFALGIGIYILYSALRMG.

It belongs to the cation diffusion facilitator (CDF) transporter (TC 2.A.4) family. FieF subfamily. Homodimer.

The protein resides in the cell inner membrane. It carries out the reaction Zn(2+)(in) + H(+)(out) = Zn(2+)(out) + H(+)(in). The catalysed reaction is Cd(2+)(in) + H(+)(out) = Cd(2+)(out) + H(+)(in). It catalyses the reaction Fe(2+)(in) + H(+)(out) = Fe(2+)(out) + H(+)(in). In terms of biological role, divalent metal cation transporter which exports Zn(2+), Cd(2+) and possibly Fe(2+). May be involved in zinc and iron detoxification by efflux. The protein is Cation-efflux pump FieF of Salmonella agona (strain SL483).